The sequence spans 483 residues: Trehalose-6-phosphate synthase (483 aa).

Arginine 22 contributes to the D-glucose 6-phosphate binding site. 42–43 (GG) is a UDP-alpha-D-glucose binding site. D-glucose 6-phosphate contacts are provided by tyrosine 94 and aspartate 148. Residues arginine 290 and lysine 295 each coordinate UDP-alpha-D-glucose. Residue arginine 328 coordinates D-glucose 6-phosphate. 393 to 397 (LVAKE) lines the UDP-alpha-D-glucose pocket.

The protein belongs to the glycosyltransferase 20 family. Homotetramer.

It catalyses the reaction ADP-alpha-D-glucose + D-glucose 6-phosphate = alpha,alpha-trehalose 6-phosphate + ADP + H(+). It carries out the reaction CDP-alpha-D-glucose + D-glucose 6-phosphate = alpha,alpha-trehalose 6-phosphate + CDP + H(+). The enzyme catalyses GDP-alpha-D-glucose + D-glucose 6-phosphate = alpha,alpha-trehalose 6-phosphate + GDP + H(+). The catalysed reaction is TDP-alpha-D-glucose + D-glucose 6-phosphate = 5-methyl-UDP + alpha,alpha-trehalose 6-phosphate + H(+). It catalyses the reaction D-glucose 6-phosphate + UDP-alpha-D-glucose = alpha,alpha-trehalose 6-phosphate + UDP + H(+). The protein operates within glycan biosynthesis; trehalose biosynthesis. Its function is as follows. Probably involved in the osmoprotection via the biosynthesis of trehalose and in the production of glycogen and alpha-glucan via the TreS-Pep2 branch involved in the biosynthesis of maltose-1-phosphate (M1P). Catalyzes the transfer of glucose from UDP-glucose (UDP-Glc) to D-glucose 6-phosphate (Glc-6-P) to form trehalose-6-phosphate. Probably also able to use ADP-Glc, CDP-Glc, GDP-Glc and TDP-Glc as glucosyl donors. The protein is Trehalose-6-phosphate synthase of Mycobacterium sp. (strain JLS).